A 287-amino-acid chain; its full sequence is Bifunctional protein FolD (287 aa).

NADP(+) contacts are provided by residues 165–167 (NRS), Ser190, and Ile233.

This sequence belongs to the tetrahydrofolate dehydrogenase/cyclohydrolase family. Homodimer.

The enzyme catalyses (6R)-5,10-methylene-5,6,7,8-tetrahydrofolate + NADP(+) = (6R)-5,10-methenyltetrahydrofolate + NADPH. It catalyses the reaction (6R)-5,10-methenyltetrahydrofolate + H2O = (6R)-10-formyltetrahydrofolate + H(+). It functions in the pathway one-carbon metabolism; tetrahydrofolate interconversion. Its function is as follows. Catalyzes the oxidation of 5,10-methylenetetrahydrofolate to 5,10-methenyltetrahydrofolate and then the hydrolysis of 5,10-methenyltetrahydrofolate to 10-formyltetrahydrofolate. This is Bifunctional protein FolD from Nitrosopumilus maritimus (strain SCM1).